The sequence spans 218 residues: Suppressor of silencing P0 (218 aa).

Residues 63–67 (LPLHL) form the F-box-like domain.

Belongs to the polerovirus P0 protein family. As to quaternary structure, interacts (via F-box-like domain) with host AGO1; this interaction targets AGO1 for degradation, and thereby suppresses the silencing function of the latter. Interacts (via F-box-like domain) with host ASK1 and ASK2 (SKP proteins); these interactions are essential for viral pathogenicity. Part of a SCF P0 complex composed of P0 and the host proteins SKP and CUL1.

Its function is as follows. Suppressor of RNA-mediated gene silencing, also known as post-transcriptional gene silencing (PTGS), a mechanism of plant viral defense that limits the accumulation of viral RNAs. The P0 protein suppresses local PTGS using its F-box-like domain to mediate destabilization and degradation of the AGO1 protein. The protein is Suppressor of silencing P0 of Beet western yellows virus (isolate GB1) (BWYV).